Here is a 329-residue protein sequence, read N- to C-terminus: NAC domain-containing protein 79 (329 aa).

In terms of domain architecture, NAC spans 17–167 (LPPGFRFHPT…EWVICRVFHK (151 aa)). Residues 114-173 (VGMKKTLVFYRGRAPKGQKTNWVMHEYRLDGKLSAHNLPKTAKNEWVICRVFHKTAGGKK) mediate DNA binding.

In terms of tissue distribution, expressed at low levels in leaves.

It is found in the nucleus. This chain is NAC domain-containing protein 79, found in Arabidopsis thaliana (Mouse-ear cress).